Consider the following 363-residue polypeptide: Chalcone synthase B (363 aa).

The active site involves Cys-170.

Belongs to the thiolase-like superfamily. Chalcone/stilbene synthases family.

It catalyses the reaction (E)-4-coumaroyl-CoA + 3 malonyl-CoA + 3 H(+) = 2',4,4',6'-tetrahydroxychalcone + 3 CO2 + 4 CoA. The protein operates within secondary metabolite biosynthesis; flavonoid biosynthesis. The primary product of this enzyme is 4,2',4',6'-tetrahydroxychalcone (also termed naringenin-chalcone or chalcone) which can under specific conditions spontaneously isomerize into naringenin. In Ipomoea cordatotriloba (Tievine), this protein is Chalcone synthase B (CHSB).